The following is a 520-amino-acid chain: Probable helicase MJECL08 (520 aa).

Residues Arg162, 171 to 176, and 501 to 502 contribute to the ATP site; these read GAGKSN and KI.

Belongs to the HerA family.

It catalyses the reaction Couples ATP hydrolysis with the unwinding of duplex DNA at the replication fork by translocating in the 5'-3' direction. This creates two antiparallel DNA single strands (ssDNA). The leading ssDNA polymer is the template for DNA polymerase III holoenzyme which synthesizes a continuous strand.. The enzyme catalyses ATP + H2O = ADP + phosphate + H(+). It carries out the reaction Couples ATP hydrolysis with the unwinding of duplex DNA by translocating in the 3'-5' direction.. Functionally, a probably bidirectional DNA helicase. This is Probable helicase MJECL08 from Methanocaldococcus jannaschii (strain ATCC 43067 / DSM 2661 / JAL-1 / JCM 10045 / NBRC 100440) (Methanococcus jannaschii).